The chain runs to 248 residues: Probable S-methyl-5'-thioinosine phosphorylase (248 aa).

Residues Thr12 and 54–55 (RH) contribute to the phosphate site. A substrate-binding site is contributed by Met187. Thr188 contacts phosphate. Position 211 to 213 (211 to 213 (NWA)) interacts with substrate.

This sequence belongs to the PNP/MTAP phosphorylase family. MTAP subfamily. Homotrimer.

It catalyses the reaction S-methyl-5'-thioinosine + phosphate = 5-(methylsulfanyl)-alpha-D-ribose 1-phosphate + hypoxanthine. It functions in the pathway purine metabolism; purine nucleoside salvage. Catalyzes the reversible phosphorylation of S-methyl-5'-thioinosine (MTI) to hypoxanthine and 5-methylthioribose-1-phosphate. Involved in the breakdown of S-methyl-5'-thioadenosine (MTA), a major by-product of polyamine biosynthesis. Catabolism of (MTA) occurs via deamination to MTI and phosphorolysis to hypoxanthine. The sequence is that of Probable S-methyl-5'-thioinosine phosphorylase from Xylella fastidiosa (strain Temecula1 / ATCC 700964).